Reading from the N-terminus, the 563-residue chain is Eukaryotic translation initiation factor 3 subunit D-1 (563 aa).

The interval 98–136 is disordered; it reads VQKPPHQRGRFRNMRGRGGRGRNPRGGLNNHHHHGMTTL. Residues 100–120 show a composition bias toward basic residues; it reads KPPHQRGRFRNMRGRGGRGRN. The RNA gate stretch occupies residues 291–305; that stretch reads EFDLLTVNESSVEPP.

The protein belongs to the eIF-3 subunit D family. In terms of assembly, component of the eukaryotic translation initiation factor 3 (eIF-3) complex. The eIF-3 complex interacts with pix.

Its subcellular location is the cytoplasm. MRNA cap-binding component of the eukaryotic translation initiation factor 3 (eIF-3) complex, which is involved in protein synthesis of a specialized repertoire of mRNAs and, together with other initiation factors, stimulates binding of mRNA and methionyl-tRNAi to the 40S ribosome. The eIF-3 complex specifically targets and initiates translation of a subset of mRNAs involved in cell proliferation. In the eIF-3 complex, eif3d specifically recognizes and binds the 7-methylguanosine cap of a subset of mRNAs. In Drosophila pseudoobscura pseudoobscura (Fruit fly), this protein is Eukaryotic translation initiation factor 3 subunit D-1.